The chain runs to 452 residues: GPI mannosyltransferase 2 (452 aa).

Topologically, residues Met-1–Lys-7 are cytoplasmic. The helical transmembrane segment at Leu-8 to Pro-28 threads the bilayer. The Lumenal portion of the chain corresponds to Asp-29–Ala-113. A helical transmembrane segment spans residues Leu-114–Leu-134. Topologically, residues Tyr-135–Ser-161 are cytoplasmic. The helical transmembrane segment at Ile-162–Leu-182 threads the bilayer. The Lumenal segment spans residues Glu-183 to Asn-209. Residues Gly-210–Gly-230 form a helical membrane-spanning segment. The Cytoplasmic portion of the chain corresponds to Ser-231 to Leu-238. A helical transmembrane segment spans residues Phe-239–Ile-259. At Tyr-260 to Ser-284 the chain is on the lumenal side. A helical transmembrane segment spans residues Phe-285–Pro-305. Residues Tyr-306–Leu-327 lie on the Cytoplasmic side of the membrane. The helical transmembrane segment at Pro-328–Ile-348 threads the bilayer. The Lumenal portion of the chain corresponds to Arg-349 to Glu-370. A helical transmembrane segment spans residues His-371–Val-391. Topologically, residues His-392–Arg-398 are cytoplasmic. The chain crosses the membrane as a helical span at residues Leu-399–Phe-419. Topologically, residues Gln-420–Lys-426 are lumenal. The helical transmembrane segment at Ala-427–Asn-447 threads the bilayer. Residues Asn-448–Thr-452 are Cytoplasmic-facing.

The protein belongs to the PIGV family.

Its subcellular location is the endoplasmic reticulum membrane. The protein operates within glycolipid biosynthesis; glycosylphosphatidylinositol-anchor biosynthesis. In terms of biological role, mannosyltransferase involved in glycosylphosphatidylinositol-anchor biosynthesis. Transfers the second mannose to the glycosylphosphatidylinositol during GPI precursor assembly. Required for the GPI-mediated endoplasmic reticulum exit and proper targeting to the cell surface of chp. Required for GPI-mediated membrane attachment of chp, qsm and Cont. Essential for microvillar stability in the rhabdomere. The chain is GPI mannosyltransferase 2 from Drosophila pseudoobscura pseudoobscura (Fruit fly).